The primary structure comprises 302 residues: Cobalt-precorrin-6A reductase (302 aa).

Over residues 1-10 (MQTPEIKEGT) the composition is skewed to basic and acidic residues. The interval 1–37 (MQTPEIKEGTEQYLWRRKTMNPGDKGVKRKGSDRQRE) is disordered.

The protein belongs to the precorrin-6x reductase family.

It carries out the reaction Co-precorrin-6B + NAD(+) = Co-precorrin-6A + NADH + H(+). It functions in the pathway cofactor biosynthesis; adenosylcobalamin biosynthesis; cob(II)yrinate a,c-diamide from sirohydrochlorin (anaerobic route): step 7/10. Its function is as follows. Catalyzes the reduction of the macrocycle of cobalt-precorrin-6A to cobalt-precorrin-6B. This Methanothermobacter thermautotrophicus (strain ATCC 29096 / DSM 1053 / JCM 10044 / NBRC 100330 / Delta H) (Methanobacterium thermoautotrophicum) protein is Cobalt-precorrin-6A reductase (cbiJ).